Here is a 252-residue protein sequence, read N- to C-terminus: Ribosomal RNA small subunit methyltransferase J (252 aa).

Residues R101–D102, E117–R118, S153–S154, and D171 each bind S-adenosyl-L-methionine.

It belongs to the methyltransferase superfamily. RsmJ family.

It is found in the cytoplasm. It catalyses the reaction guanosine(1516) in 16S rRNA + S-adenosyl-L-methionine = N(2)-methylguanosine(1516) in 16S rRNA + S-adenosyl-L-homocysteine + H(+). Specifically methylates the guanosine in position 1516 of 16S rRNA. The protein is Ribosomal RNA small subunit methyltransferase J of Salmonella paratyphi B (strain ATCC BAA-1250 / SPB7).